The primary structure comprises 509 residues: Oligo-1,6-glucosidase (509 aa).

Catalysis depends on D198, which acts as the Nucleophile. The active-site Proton donor is E254.

Belongs to the glycosyl hydrolase 13 family.

It is found in the cytoplasm. The catalysed reaction is Hydrolysis of (1-&gt;6)-alpha-D-glucosidic linkages in some oligosaccharides produced from starch and glycogen by alpha-amylase, and in isomaltose.. The polypeptide is Oligo-1,6-glucosidase (malL) (Bacillus sp. (strain F5)).